A 66-amino-acid chain; its full sequence is Phylloseptin-S3 (66 aa).

The first 22 residues, 1–22, serve as a signal peptide directing secretion; that stretch reads MAFLKKSLFLVLFLGLVSLSIC. The propeptide occupies 23-46; it reads EEEKRETEEEEHDQEEDDKSEEKR. The tract at residues 25–44 is disordered; it reads EKRETEEEEHDQEEDDKSEE. Residues 30–41 are compositionally biased toward acidic residues; that stretch reads EEEEHDQEEDDK. A Phenylalanine amide modification is found at Phe65.

It belongs to the frog skin active peptide (FSAP) family. Phylloseptin subfamily. In terms of tissue distribution, expressed by the skin glands.

The protein resides in the secreted. The protein localises to the target cell membrane. Antimicrobial peptide with activity against the Gram-positive S.pyogenes (MIC=12.5 uM), but not against all other bacteria tested (both Gram-positive and Gram-negative). Does not show activity against fungi, and against Leishmania species. This is Phylloseptin-S3 from Phyllomedusa sauvagei (Sauvage's leaf frog).